A 192-amino-acid chain; its full sequence is uncharacterized protein (192 aa).

The disordered stretch occupies residues 71 to 100; it reads NNVLPEPSKPNNPVVNPPVSPIQPKTDPEQ. The segment covering 77-91 has biased composition (pro residues); it reads PSKPNNPVVNPPVSP.

This is an uncharacterized protein from Caenorhabditis elegans.